Consider the following 244-residue polypeptide: tRNA pseudouridine synthase B (244 aa).

D46 functions as the Nucleophile in the catalytic mechanism.

The protein belongs to the pseudouridine synthase TruB family. Type 1 subfamily.

The catalysed reaction is uridine(55) in tRNA = pseudouridine(55) in tRNA. In terms of biological role, responsible for synthesis of pseudouridine from uracil-55 in the psi GC loop of transfer RNAs. This chain is tRNA pseudouridine synthase B, found in Bordetella parapertussis (strain 12822 / ATCC BAA-587 / NCTC 13253).